We begin with the raw amino-acid sequence, 510 residues long: Maturase K (510 aa).

The protein belongs to the intron maturase 2 family. MatK subfamily.

It is found in the plastid. The protein resides in the chloroplast. Usually encoded in the trnK tRNA gene intron. Probably assists in splicing its own and other chloroplast group II introns. The sequence is that of Maturase K from Populus nigra (Lombardy poplar).